The primary structure comprises 370 residues: Putative glutamate--cysteine ligase 2 (370 aa).

Belongs to the glutamate--cysteine ligase type 2 family. YbdK subfamily.

The enzyme catalyses L-cysteine + L-glutamate + ATP = gamma-L-glutamyl-L-cysteine + ADP + phosphate + H(+). Functionally, ATP-dependent carboxylate-amine ligase which exhibits weak glutamate--cysteine ligase activity. The chain is Putative glutamate--cysteine ligase 2 from Herminiimonas arsenicoxydans.